Here is a 104-residue protein sequence, read N- to C-terminus: Ribonucleotide reductase inhibitor protein SML1 (104 aa).

An N-acetylmethionine modification is found at Met-1. Residues 43 to 62 (PMLSTQNSMGSSASASASSL) form a disordered region. Phosphoserine; by DUN1 occurs at positions 56, 58, and 60.

As to quaternary structure, homodimer; disulfide-linked. Interacts with RNR1. In terms of processing, phosphorylated by DUN1, a downstream effector of the Mec1/Rad53 checkpoint pathway, in response to DNA damage. This promotes ubiquitination of SML1 and targets it for degradation by the 26S proteasome.

The protein resides in the nucleus. It is found in the cytoplasm. Its function is as follows. Strong inhibitor of ribonucleotide reductase (RNR1) and is involved in regulating dNTP production. The protein is Ribonucleotide reductase inhibitor protein SML1 (SML1) of Saccharomyces cerevisiae (strain ATCC 204508 / S288c) (Baker's yeast).